Reading from the N-terminus, the 299-residue chain is Acetylglutamate kinase (299 aa).

Residues 72-73, arginine 94, and asparagine 196 contribute to the substrate site; that span reads GG.

It belongs to the acetylglutamate kinase family. ArgB subfamily.

It is found in the cytoplasm. It catalyses the reaction N-acetyl-L-glutamate + ATP = N-acetyl-L-glutamyl 5-phosphate + ADP. The protein operates within amino-acid biosynthesis; L-arginine biosynthesis; N(2)-acetyl-L-ornithine from L-glutamate: step 2/4. Catalyzes the ATP-dependent phosphorylation of N-acetyl-L-glutamate. The sequence is that of Acetylglutamate kinase from Paraburkholderia phymatum (strain DSM 17167 / CIP 108236 / LMG 21445 / STM815) (Burkholderia phymatum).